A 356-amino-acid polypeptide reads, in one-letter code: Testis-expressed protein 19.1 (356 aa).

The interaction with LIRE1 stretch occupies residues 1–78; sequence MCPPVSVRHG…WDAEPMEHLS (78 aa). The span at 59–72 shows a compositional bias: acidic residues; sequence LSEEEEEEEVWDAE. The interval 59 to 107 is disordered; the sequence is LSEEEEEEEVWDAEPMEHLSESESLESDSKQDAGSEQDAGSEPNTRSEQ. A compositionally biased stretch (basic and acidic residues) spans 73–91; the sequence is PMEHLSESESLESDSKQDA. Residues 139-186 form an important for interaction with piRNA region; it reads QWVVFSISVPTELLPQEAVPLDLGPEDVEWTQALPWRLDVLFPCSHRL.

As to quaternary structure, interacts with UBR2; does not lead to Tex19.1 degradation and stabilizes it. Interacts with piRNA-associated proteins DDX4, EDC4, MAEL, PIWIL1, PIWIL2, RANBP9 and TDRD6. Interacts with L1RE1.

It localises to the cytoplasm. Required during spermatogenesis and placenta development, participating in the repression of retrotransposable elements and prevent their mobilization. Collaborates with the Piwi-interacting RNA (piRNA) pathway, which mediates the repression of transposable elements during meiosis by forming complexes composed of piRNAs and Piwi proteins. Interacts with Piwi proteins and directly binds piRNAs, a class of 24 to 30 nucleotide RNAs that are generated by a Dicer-independent mechanism and are primarily derived from transposons and other repeated sequence elements. Also during spermatogenesis, promotes, with UBR2, SPO11-dependent recombination foci to accumulate and drive robust homologous chromosome synapsis. Interacts with LINE-1 retrotransposon encoded LIRE1, stimulates LIRE1 polyubiquitination, mediated by UBR2, and degradation, inhibiting LINE-1 retrotransposon mobilization. This chain is Testis-expressed protein 19.1 (Tex19.1), found in Rattus norvegicus (Rat).